The following is an 85-amino-acid chain: Small ribosomal subunit protein bS20 (85 aa).

This sequence belongs to the bacterial ribosomal protein bS20 family.

In terms of biological role, binds directly to 16S ribosomal RNA. The sequence is that of Small ribosomal subunit protein bS20 from Ruminiclostridium cellulolyticum (strain ATCC 35319 / DSM 5812 / JCM 6584 / H10) (Clostridium cellulolyticum).